Reading from the N-terminus, the 126-residue chain is Bleomycin resistance protein (126 aa).

The VOC domain occupies 1-119 (MTDQATPNLP…DGTLLRLIQN (119 aa)).

Belongs to the bleomycin resistance protein family.

In terms of biological role, binding protein with a strong affinity to the bleomycin family of antibiotics. Binds to CL990; an antimitotic-antibiotic compound. The chain is Bleomycin resistance protein (ble) from Klebsiella pneumoniae.